Consider the following 566-residue polypeptide: Chromatin assembly factor 1 subunit B (566 aa).

WD repeat units lie at residues 11–54, 64–103, 127–166, 169–208, 228–279, and 351–392; these read HNKE…DGKA, RHTK…ELEP, GHLE…KVSI, EHKS…VAFN, FHDD…RPMG, and IHYH…IPLK. 2 disordered regions span residues 411–481 and 501–566; these read KSQP…NQPR and IPLK…KPNK. Polar residues-rich tracts occupy residues 425–437 and 469–478; these read TEGT…TLQP and QPASQSTKVN.

Belongs to the WD repeat HIR1 family. Interacts with CHAF1A.

Its subcellular location is the nucleus. Acts as a component of the histone chaperone complex chromatin assembly factor 1 (CAF-1), which assembles histone octamers onto DNA during replication and repair. CAF-1 performs the first step of the nucleosome assembly process, bringing newly synthesized histones H3 and H4 to replicating DNA; histones H2A/H2B can bind to this chromatin precursor subsequent to DNA replication to complete the histone octamer. This chain is Chromatin assembly factor 1 subunit B (CHAF1B), found in Gallus gallus (Chicken).